A 554-amino-acid chain; its full sequence is uncharacterized protein (554 aa).

Disordered stretches follow at residues methionine 1–aspartate 127, isoleucine 139–glycine 173, asparagine 293–glutamate 395, and phenylalanine 416–arginine 509. 3 stretches are compositionally biased toward low complexity: residues serine 9 to isoleucine 30, aspartate 46 to asparagine 55, and serine 63 to tyrosine 125. Over residues isoleucine 139–serine 153 the composition is skewed to acidic residues. A compositionally biased stretch (polar residues) spans asparagine 164–glycine 173. 3 stretches are compositionally biased toward low complexity: residues asparagine 293–asparagine 387, phenylalanine 416–serine 449, and serine 461–histidine 484. Positions histidine 485 to isoleucine 508 are enriched in basic residues.

This is an uncharacterized protein from Dictyostelium discoideum (Social amoeba).